We begin with the raw amino-acid sequence, 61 residues long: U-scoloptoxin(14)-Sm1a (61 aa).

Positions 1–24 are cleaved as a signal peptide; that stretch reads MNPKLCMLLLVCLMAFYVIETVQA.

It belongs to the scoloptoxin-14 family. Contains 4 disulfide bonds. In terms of tissue distribution, expressed by the venom gland.

Its subcellular location is the secreted. In Scolopendra morsitans (Tanzanian blue ringleg centipede), this protein is U-scoloptoxin(14)-Sm1a.